Here is a 384-residue protein sequence, read N- to C-terminus: Lipoprotein LprN (384 aa).

Positions 1-20 (MNRIWLRAIILTASSALLAG) are cleaved as a signal peptide. Cys-21 carries N-palmitoyl cysteine lipidation. Residue Cys-21 is the site of S-diacylglycerol cysteine attachment.

Lipidated upon expression in E.coli.

The protein localises to the cell membrane. Stimulates the host (mouse) immune response; lipidated protein produced in E.coli stimulates T-cell proliferation in mice previously sensitized with LprN. Spleenocytes from these mice produce increased amounts of TNF-alpha and IFN-gamma, as well as somewhat increased nitric oxide levels, upon subsequent challenge with LprN. Previously sensitized mice infected with M.tuberculosis have an exacerbated disease response, suggesting this lipoprotein may down-regulate the host's immune response. The polypeptide is Lipoprotein LprN (lprN) (Mycobacterium tuberculosis (strain ATCC 25618 / H37Rv)).